Reading from the N-terminus, the 124-residue chain is Putative membrane protein insertion efficiency factor (124 aa).

It belongs to the UPF0161 family.

It is found in the cell inner membrane. Could be involved in insertion of integral membrane proteins into the membrane. In Psychrobacter arcticus (strain DSM 17307 / VKM B-2377 / 273-4), this protein is Putative membrane protein insertion efficiency factor.